The sequence spans 566 residues: KsdD-like steroid dehydrogenase Rv0785 (566 aa).

FAD is bound at residue 23-54; the sequence is DAIVVGAGLAGLVAACELADRGLRVLILDQEN.

Belongs to the FAD-dependent oxidoreductase 2 family. Requires FAD as cofactor.

The protein operates within lipid metabolism; steroid biosynthesis. Able to catalyze the elimination of the C-1 and C-2 hydrogen atoms of the A-ring from the polycyclic ring structure of 3-ketosteroids. This chain is KsdD-like steroid dehydrogenase Rv0785, found in Mycobacterium tuberculosis (strain ATCC 25618 / H37Rv).